Consider the following 138-residue polypeptide: Histone H2B.8 (138 aa).

The segment covering 1-38 (MAPKAAEKKPAGKKPAEKAPAEKLPKAEKKITKEGGSE) has biased composition (basic and acidic residues). The segment at 1 to 45 (MAPKAAEKKPAGKKPAEKAPAEKLPKAEKKITKEGGSEKKKKKSK) is disordered. A2 is modified (n,N,N-trimethylalanine; alternate). A2 is modified (n,N-dimethylalanine; alternate). Position 2 is an N-methylalanine; alternate (A2). At K4 the chain carries N6-methyllysine. N6-acetyllysine occurs at positions 8 and 13. K14 bears the N6,N6-dimethyllysine mark. Residues K18, K23, K29, and K30 each carry the N6-acetyllysine modification. Residue K134 forms a Glycyl lysine isopeptide (Lys-Gly) (interchain with G-Cter in ubiquitin) linkage.

This sequence belongs to the histone H2B family. The nucleosome is a histone octamer containing two molecules each of H2A, H2B, H3 and H4 assembled in one H3-H4 heterotetramer and two H2A-H2B heterodimers. The octamer wraps approximately 147 bp of DNA. In terms of processing, can be acetylated to form H2BK6ac, H2BK33ac and H2BK34ac. Post-translationally, monoubiquitinated by BRE1 to form H2BK143ub1 and deubiquitinated by UBP26. Required for heterochromatic histone H3 di- and trimethylation at H3K4me. May give a specific tag for epigenetic transcriptional activation.

Its subcellular location is the nucleus. The protein localises to the chromosome. Its function is as follows. Core component of nucleosome. Nucleosomes wrap and compact DNA into chromatin, limiting DNA accessibility to the cellular machineries which require DNA as a template. Histones thereby play a central role in transcription regulation, DNA repair, DNA replication and chromosomal stability. DNA accessibility is regulated via a complex set of post-translational modifications of histones, also called histone code, and nucleosome remodeling. In Arabidopsis thaliana (Mouse-ear cress), this protein is Histone H2B.8.